We begin with the raw amino-acid sequence, 249 residues long: E3 ubiquitin-protein ligase RMA1 (249 aa).

The RING-type zinc finger occupies 48–97 (CNICLDSVQEPVVTLCGHLFCWPCIHKWLDVQSFSTSDEYQRHRQCPVCK). The helical; Anchor for type IV membrane protein transmembrane segment at 231–248 (LGRIFFFFMCCVVLCLLL) threads the bilayer.

Ubiquitous. Highly expressed in roots.

The protein localises to the endoplasmic reticulum membrane. The catalysed reaction is S-ubiquitinyl-[E2 ubiquitin-conjugating enzyme]-L-cysteine + [acceptor protein]-L-lysine = [E2 ubiquitin-conjugating enzyme]-L-cysteine + N(6)-ubiquitinyl-[acceptor protein]-L-lysine.. It functions in the pathway protein modification; protein ubiquitination. Its function is as follows. E3 ubiquitin-protein ligase that promotes the ubiquitination and proteasomal degradation of aquaporin PIP2-1. Forms a ubiquitin ligase complex in cooperation with the E2 enzymes UCB8/UCB10. The sequence is that of E3 ubiquitin-protein ligase RMA1 (RMA1) from Arabidopsis thaliana (Mouse-ear cress).